Consider the following 117-residue polypeptide: uncharacterized protein (117 aa).

Positions 5–50 (DKIHNTNEQITALEKKKYQIETTLLEKQRDLLKLETQQNKAKLELL) form a coiled coil.

This is an uncharacterized protein from Bacillus pumilus (Bacillus mesentericus).